The following is a 444-amino-acid chain: Homogentisate 1,2-dioxygenase (444 aa).

The disordered stretch occupies residues Gly92–Pro111. His298 functions as the Proton acceptor in the catalytic mechanism. Positions 341 and 347 each coordinate Fe cation. Residues Tyr356 and His377 each coordinate homogentisate. His377 is a binding site for Fe cation.

Belongs to the homogentisate dioxygenase family. Hexamer; dimer of trimers. Fe cation is required as a cofactor.

It catalyses the reaction homogentisate + O2 = 4-maleylacetoacetate + H(+). The protein operates within amino-acid degradation; L-phenylalanine degradation; acetoacetate and fumarate from L-phenylalanine: step 4/6. Functionally, involved in the catabolism of homogentisate (2,5-dihydroxyphenylacetate or 2,5-OH-PhAc), a central intermediate in the degradation of phenylalanine and tyrosine. Catalyzes the oxidative ring cleavage of the aromatic ring of homogentisate to yield maleylacetoacetate. This chain is Homogentisate 1,2-dioxygenase, found in Burkholderia vietnamiensis (strain G4 / LMG 22486) (Burkholderia cepacia (strain R1808)).